Consider the following 312-residue polypeptide: MKWSEISIHTTEEAVEAVSHILHEAGASGVAIEDPAELTKEREQQYGEIYALNPDEYPAEGVLIKAYFPQTDSLHETIAGVKSSIDVLPSYDIEIGTGNITVNEVNEEDWATAWKKYYHPVQISDTFTIVPTWEEYTPSSPEEKIIELDPGMAFGTGTHPTTTMCIRALERTVQPGNTIIDVGTGSGVLSIAAAKLGASSVQAYDLDPVAVESAEMNVRLNKTDDIVSVGQNSLLEGIEGPVDLIVANLLAEIILLFPEDAARVVKSGGLFITSGIIAAKEKVISEALEKAGFTIEEVLRMEDWVAIIARNA.

Thr-162, Gly-183, Asp-205, and Asn-248 together coordinate S-adenosyl-L-methionine.

This sequence belongs to the methyltransferase superfamily. PrmA family.

The protein localises to the cytoplasm. It catalyses the reaction L-lysyl-[protein] + 3 S-adenosyl-L-methionine = N(6),N(6),N(6)-trimethyl-L-lysyl-[protein] + 3 S-adenosyl-L-homocysteine + 3 H(+). In terms of biological role, methylates ribosomal protein L11. In Bacillus cereus (strain Q1), this protein is Ribosomal protein L11 methyltransferase.